The primary structure comprises 95 residues: Aspartyl/glutamyl-tRNA(Asn/Gln) amidotransferase subunit C (95 aa).

Belongs to the GatC family. In terms of assembly, heterotrimer of A, B and C subunits.

It catalyses the reaction L-glutamyl-tRNA(Gln) + L-glutamine + ATP + H2O = L-glutaminyl-tRNA(Gln) + L-glutamate + ADP + phosphate + H(+). The catalysed reaction is L-aspartyl-tRNA(Asn) + L-glutamine + ATP + H2O = L-asparaginyl-tRNA(Asn) + L-glutamate + ADP + phosphate + 2 H(+). Its function is as follows. Allows the formation of correctly charged Asn-tRNA(Asn) or Gln-tRNA(Gln) through the transamidation of misacylated Asp-tRNA(Asn) or Glu-tRNA(Gln) in organisms which lack either or both of asparaginyl-tRNA or glutaminyl-tRNA synthetases. The reaction takes place in the presence of glutamine and ATP through an activated phospho-Asp-tRNA(Asn) or phospho-Glu-tRNA(Gln). The protein is Aspartyl/glutamyl-tRNA(Asn/Gln) amidotransferase subunit C of Geotalea daltonii (strain DSM 22248 / JCM 15807 / FRC-32) (Geobacter daltonii).